A 303-amino-acid polypeptide reads, in one-letter code: Ribosomal protein L11 methyltransferase (303 aa).

S-adenosyl-L-methionine-binding residues include Thr144, Gly165, Asp187, and Asn235.

It belongs to the methyltransferase superfamily. PrmA family.

Its subcellular location is the cytoplasm. It catalyses the reaction L-lysyl-[protein] + 3 S-adenosyl-L-methionine = N(6),N(6),N(6)-trimethyl-L-lysyl-[protein] + 3 S-adenosyl-L-homocysteine + 3 H(+). Methylates ribosomal protein L11. The polypeptide is Ribosomal protein L11 methyltransferase (Prochlorococcus marinus (strain MIT 9301)).